The chain runs to 63 residues: Acrosin inhibitor 1 (63 aa).

A Kazal-like domain is found at 8 to 63 (FGFPPDCKVYTEACTREYNPICDSAAKTYSNECTFCNEKMNNDADIHFNHFGECEY). Cystine bridges form between C14-C43, C21-C40, and C29-C61.

As to expression, seminal plasma.

It localises to the secreted. In terms of biological role, strong inhibitor of acrosin. The polypeptide is Acrosin inhibitor 1 (Bos taurus (Bovine)).